Reading from the N-terminus, the 209-residue chain is Large ribosomal subunit protein uL3 (209 aa).

The segment at 126-148 (HGQSRGPMAHGSRYHRRPGSMGP) is disordered.

It belongs to the universal ribosomal protein uL3 family. As to quaternary structure, part of the 50S ribosomal subunit. Forms a cluster with proteins L14 and L19.

In terms of biological role, one of the primary rRNA binding proteins, it binds directly near the 3'-end of the 23S rRNA, where it nucleates assembly of the 50S subunit. The sequence is that of Large ribosomal subunit protein uL3 from Listeria monocytogenes serotype 4b (strain CLIP80459).